A 314-amino-acid chain; its full sequence is Protein ATP1B4 (314 aa).

A compositionally biased stretch (polar residues) spans 1–17 (MATTAGEQANYLQSADS). A disordered region spans residues 1–37 (MATTAGEQANYLQSADSMSDGRQHHPEEAGEKKQEEQ). At 1–69 (MATTAGEQAN…VLGRDKKSWA (69 aa)) the chain is on the cytoplasmic side. Residues 19 to 37 (SDGRQHHPEEAGEKKQEEQ) are compositionally biased toward basic and acidic residues. A helical membrane pass occupies residues 70–90 (LILLFYFILYCFLAGLFALCI). Residues 91-314 (YGLLATISPY…GRVAFTLHIG (224 aa)) lie on the Extracellular side of the membrane. Cys160 and Cys179 are joined by a disulfide. The N-linked (GlcNAc...) asparagine glycan is linked to Asn188. 2 disulfide bridges follow: Cys189/Cys205 and Cys228/Cys287. N-linked (GlcNAc...) asparagine glycosylation is present at Asn264.

It belongs to the X(+)/potassium ATPases subunit beta family. As to quaternary structure, composed of two subunits: alpha (catalytic) and beta (accessory). Glycosylated. In terms of tissue distribution, expressed in skeletal muscle, liver, lung, kidney, heart, brain and skin.

It is found in the membrane. Functionally, this is the non-catalytic component of the active enzyme, which catalyzes the hydrolysis of ATP coupled with the exchange of Na(+) and K(+) ions across the plasma membrane. The chain is Protein ATP1B4 (atp1b4) from Xenopus laevis (African clawed frog).